The sequence spans 630 residues: Pentatricopeptide repeat-containing protein At1g63130, mitochondrial (630 aa).

Residues 1–22 (MRRLFAISSTGNRFVHRSLLGK) constitute a mitochondrion transit peptide. PPR repeat units lie at residues 80–114 (SIVE…GISH), 115–149 (NLYT…GYEP), 150–184 (DIVT…GYQP), 185–219 (DSFT…GCQP), 220–254 (DLVT…KIEP), 255–289 (GVVI…GIRP), 290–324 (NVVT…KINP), 325–359 (NVVT…SIDP), 360–394 (DIFT…DCFP), 395–429 (NVVT…GLVG), 430–464 (NTVT…GVLP), 465–499 (DIMT…KMEP), 500–534 (DIYT…GVKP), 535–569 (NVVT…GPLP), and 570–604 (DSGT…RFVG).

Belongs to the PPR family. P subfamily.

It is found in the mitochondrion. This Arabidopsis thaliana (Mouse-ear cress) protein is Pentatricopeptide repeat-containing protein At1g63130, mitochondrial.